The sequence spans 92 residues: MIKANLQLFAHKKGVGSTRNGRDSESKRLGVKRGDGQFVKAGNILVRQRGTKIHPGLNVGKGKDDTLFALVDGRVKFSRLGKDRKQVSIIPA.

Residues 1–9 (MIKANLQLF) constitute a propeptide that is removed on maturation.

The protein belongs to the bacterial ribosomal protein bL27 family. The N-terminus is cleaved by ribosomal processing cysteine protease Prp.

The sequence is that of Large ribosomal subunit protein bL27 from Acetivibrio thermocellus (strain ATCC 27405 / DSM 1237 / JCM 9322 / NBRC 103400 / NCIMB 10682 / NRRL B-4536 / VPI 7372) (Clostridium thermocellum).